Consider the following 376-residue polypeptide: Guanine nucleotide-binding protein G(s) subunit alpha (376 aa).

Glycine 2 carries the N-palmitoyl glycine lipid modification. Residue cysteine 3 is the site of S-palmitoyl cysteine attachment. The G-alpha domain occupies 36-376 (GTHRLLLLGA…RMHLRQYELL (341 aa)). A G1 motif region spans residues 39-52 (RLLLLGAGESGKST). Residues 44–51 (GAGESGKS), 180–186 (LRCRVLT), 205–209 (DVGGQ), 274–277 (NKQD), and alanine 348 each bind GTP. 2 residues coordinate Mg(2+): serine 51 and threonine 186. The interval 178–186 (DILRCRVLT) is G2 motif. The G3 motif stretch occupies residues 201–210 (FHMFDVGGQR). Residues 270-277 (ILFLNKQD) are G4 motif. Residues 346-351 (TCAVDT) form a G5 motif region.

Belongs to the G-alpha family. G(s) subfamily. In terms of assembly, g proteins are composed of 3 units; alpha, beta and gamma. The alpha chain contains the guanine nucleotide binding site.

Functionally, guanine nucleotide-binding proteins (G proteins) are involved as modulators or transducers in various transmembrane signaling systems. The G(s) protein is involved in hormonal regulation of adenylate cyclase: it activates the cyclase in response to beta-adrenergic stimuli. In Lymnaea stagnalis (Great pond snail), this protein is Guanine nucleotide-binding protein G(s) subunit alpha.